The primary structure comprises 77 residues: Putative defensin-like protein 30 (77 aa).

Residues 1-26 (MASSSKCAFLVFLCMIVLLAPSEVHA) form the signal peptide. 3 disulfides stabilise this stretch: cysteine 43–cysteine 63, cysteine 49–cysteine 72, and cysteine 53–cysteine 74.

The protein belongs to the DEFL family.

The protein resides in the secreted. The chain is Putative defensin-like protein 30 from Arabidopsis thaliana (Mouse-ear cress).